The sequence spans 361 residues: UPF0283 membrane protein mlr0776 (361 aa).

Residues 1–33 (MTAPRKPAAFRIEPEAAPTQETPKARQAELSRK) are disordered. Basic and acidic residues predominate over residues 23-32 (PKARQAELSR). Helical transmembrane passes span 73 to 93 (LFGS…VGLW) and 108 to 128 (LGWL…VILI).

Belongs to the UPF0283 family.

It localises to the cell inner membrane. This Mesorhizobium japonicum (strain LMG 29417 / CECT 9101 / MAFF 303099) (Mesorhizobium loti (strain MAFF 303099)) protein is UPF0283 membrane protein mlr0776.